The chain runs to 194 residues: Large ribosomal subunit protein uL22 (194 aa).

Belongs to the universal ribosomal protein uL22 family.

The chain is Large ribosomal subunit protein uL22 (rpl17) from Aspergillus fumigatus (strain ATCC MYA-4609 / CBS 101355 / FGSC A1100 / Af293) (Neosartorya fumigata).